A 334-amino-acid polypeptide reads, in one-letter code: Ornithine carbamoyltransferase (334 aa).

Residues 56 to 59 (STRT), Gln83, Arg107, and 134 to 137 (HPTQ) each bind carbamoyl phosphate. L-ornithine is bound by residues Asn168, Asp232, and 236–237 (SM). Carbamoyl phosphate is bound by residues 274–275 (CL) and Arg320.

Belongs to the aspartate/ornithine carbamoyltransferase superfamily. OTCase family. Homotrimer.

The protein resides in the cytoplasm. The enzyme catalyses carbamoyl phosphate + L-ornithine = L-citrulline + phosphate + H(+). Its pathway is amino-acid biosynthesis; L-arginine biosynthesis; L-arginine from L-ornithine and carbamoyl phosphate: step 1/3. Its function is as follows. Reversibly catalyzes the transfer of the carbamoyl group from carbamoyl phosphate (CP) to the N(epsilon) atom of ornithine (ORN) to produce L-citrulline. The chain is Ornithine carbamoyltransferase (argI) from Salmonella typhimurium (strain LT2 / SGSC1412 / ATCC 700720).